Reading from the N-terminus, the 159-residue chain is Major latex protein 149 (159 aa).

Belongs to the MLP family. As to expression, laticifer.

It is found in the vacuole. Its subcellular location is the cytoplasmic vesicle. Its function is as follows. Not known; MLPs constitute up to 50% of the soluble latex protein. This chain is Major latex protein 149 (MLP149), found in Papaver somniferum (Opium poppy).